The chain runs to 86 residues: BaSO(4)-adsorbing protein 1 (86 aa).

3 cysteine pairs are disulfide-bonded: Cys6–Cys22, Cys18–Cys49, and Cys39–Cys54. Residues 58–86 (GDSASNTQNQGGSRRQENEDQGDDEWDRK) are disordered. Residues 59–70 (DSASNTQNQGGS) show a composition bias toward polar residues. Over residues 76-86 (EDQGDDEWDRK) the composition is skewed to acidic residues.

Salivary gland (at protein level).

It localises to the secreted. Its function is as follows. Inhibits lectin and classical pathways of complement system activation in the host with no significant effect on the alternative pathway. Inhibits host extrinsic blood coagulation pathway but not the intrinsic cascade. Binds to neutral and negatively charged membranes in vitro; binding is reduced upon pre-incubation with Ca(2+). The chain is BaSO(4)-adsorbing protein 1 from Ornithodoros savignyi (African eyed tampan).